Reading from the N-terminus, the 196-residue chain is Regulator of G-protein signaling 8 (196 aa).

Position 26 is a phosphoserine (Ser-26). In terms of domain architecture, RGS spans 72-188 (SFDVLLSHKY…LRSKMYLDLL (117 aa)).

As to quaternary structure, interacts with GNAO1 and GNAI3.

It is found in the cell membrane. The protein resides in the membrane. It localises to the perikaryon. Its subcellular location is the cell projection. The protein localises to the dendrite. It is found in the nucleus. Its function is as follows. Regulates G protein-coupled receptor signaling cascades, including signaling via muscarinic acetylcholine receptor CHRM2 and dopamine receptor DRD2. Inhibits signal transduction by increasing the GTPase activity of G protein alpha subunits, thereby driving them into their inactive GDP-bound form. Modulates the activity of potassium channels that are activated in response to DRD2 and CHRM2 signaling. This is Regulator of G-protein signaling 8 (RGS8) from Macaca fascicularis (Crab-eating macaque).